The sequence spans 163 residues: Olfactory marker protein (163 aa).

Residue Ala2 is modified to N-acetylalanine.

This sequence belongs to the olfactory marker protein family. Interacts with BEX1 and BEX2. Uniquely associated with mature olfactory receptor neurons.

It localises to the cytoplasm. May act as a modulator of the olfactory signal-transduction cascade. In Rattus norvegicus (Rat), this protein is Olfactory marker protein (Omp).